Reading from the N-terminus, the 207-residue chain is Ribosomal RNA large subunit methyltransferase E (207 aa).

Positions 60, 62, 80, 96, and 121 each coordinate S-adenosyl-L-methionine. Lys161 serves as the catalytic Proton acceptor.

It belongs to the class I-like SAM-binding methyltransferase superfamily. RNA methyltransferase RlmE family.

The protein resides in the cytoplasm. It catalyses the reaction uridine(2552) in 23S rRNA + S-adenosyl-L-methionine = 2'-O-methyluridine(2552) in 23S rRNA + S-adenosyl-L-homocysteine + H(+). In terms of biological role, specifically methylates the uridine in position 2552 of 23S rRNA at the 2'-O position of the ribose in the fully assembled 50S ribosomal subunit. This Pseudomonas paraeruginosa (strain DSM 24068 / PA7) (Pseudomonas aeruginosa (strain PA7)) protein is Ribosomal RNA large subunit methyltransferase E.